The chain runs to 409 residues: Arginine deiminase (409 aa).

Cys-399 (amidino-cysteine intermediate) is an active-site residue.

The protein belongs to the arginine deiminase family.

The protein localises to the cytoplasm. The catalysed reaction is L-arginine + H2O = L-citrulline + NH4(+). It participates in amino-acid degradation; L-arginine degradation via ADI pathway; carbamoyl phosphate from L-arginine: step 1/2. The polypeptide is Arginine deiminase (arcA) (Latilactobacillus sakei (Lactobacillus sakei)).